The sequence spans 1019 residues: MLLLNYTQNFQLITFLLFPFINTFDYNCLKPTTTTTTSPTSSKLGFLNRSKSNSNININELKNKFLEQQQEGSISNIAGVATTQQNPSIVINSSSSSSSSSSHHPHHQKTPSNSSSNFNLIKASFNQIGVAFNNNISPRSNRKEKEKDKDKDHQDNSNINNINNINNNINNNINNNNNNNNNNNNNNNMHNPTSSSPSINNNLKGKNVASIIAANGANLNNSLSNLHQHVNNNSNNNLTNSFNSVSHNNISISSGGSALSYNYTQQLNQNGGSNNGSTSNSTSNSANNSLLSLASSINGNIGSDENGSNVMYGGDIASSYHSMSIDPLKSSTNTETIEIMVVGDELSNKARFISSFLNNGIGEDPTLEISTKKSIAIQSGAYNVNINTTVGQEEFWGINDVYYRSSQGFIFVYNVNSRESFLSFLKFRDKIIHEKGTENILMAMVGLTSPLINQESGEESCIREVTQQEAKRMADLYSCSFVELNSFGLDCEHQIQSIVTDLLGRITSGLSSTNNNNSGNNSNNNNGNSNGNSSNNNSNNNSTNNLNNSAILNESIAQSIEVLMLGDIFVGKTQIIQRLLGNPFQNAYKETTEWNRNVYQMTVNDVRYLLKIVDTCGLDIEETLNRERLVSTQGFIFVYSIASRESFLMIEQLRKKLSSIKSETKIPSVLIANKGDSLIRQVTFDEGSKMAQHLGSHYFEVSSMFSDDESIGRPFEQLLIDIQKSGNASGFEPSEIKKKGYLFKEGKKLKSMSKYFFKASRGNLSYCKNESNKSKVKSIQLSEQIQLAIPHNVHEKKDVWPFSIILDPVSKHSINLIASTEEERNAWIKAIKFNCFLEDITSNIIDDVVKSMVSEIASGVAGSGSNNGNNNGHLKRSDTTQQLNNSGSFINGINANKPVPNFSNLSISGGGSSNNSNNSTPMSSPYGSSNNFSSHLSQSTSSMSMSPQQQLQSVLLSSSNLSSSMNSSFSYSSSISSSYTDSMSGSPPDSNGQVFPQSPQLKKTLFQRTTSFSKGSKLK.

Disordered stretches follow at residues Ile89 to Phe118, Ala131 to Asn202, Gln265 to Asn287, and Ser512 to Leu546. Positions Ser93–Ser102 are enriched in low complexity. Residues Asn141–Asp155 show a composition bias toward basic and acidic residues. The stretch at Asn158–Asn188 forms a coiled coil. The segment covering Asn158–Asn202 has biased composition (low complexity). The PH domain occupies Glu735–Phe836. The span at Val860 to Gly872 shows a compositional bias: low complexity. Disordered stretches follow at residues Val860–Ile890, Asn904–Leu951, and Ser977–Lys1019. Positions Thr879–Ile890 are enriched in polar residues. Residues Ser977–Ser986 show a composition bias toward low complexity. Residues Pro987–Lys1019 are compositionally biased toward polar residues.

In terms of assembly, component of the Sca1 complex composed of at least gefA, gefH, scaA, phr, and the protein phosphatase 2A subunits pppA and pho2B. Interacts directly with gefH.

It is found in the cell membrane. Its function is as follows. Component of the Sca1 complex, a regulator of cell motility, chemotaxis and signal relay. The Sca1 complex is recruited to the plasma membrane in a chemoattractant- and F-actin-dependent manner and is enriched at the leading edge of chemotaxing cells where it regulates F-actin dynamics and signal relay by controlling the activation of rasC and the downstream target of rapamycin complex 2 (TORC2)-Akt/protein kinase B (PKB) pathway. In Dictyostelium discoideum (Social amoeba), this protein is Sca1 complex protein phr.